A 358-amino-acid chain; its full sequence is Probable cinnamyl alcohol dehydrogenase (358 aa).

Position 48 (cysteine 48) interacts with Zn(2+). Serine 50 is a binding site for NADP(+). Zn(2+) is bound by residues histidine 70, glutamate 71, cysteine 101, cysteine 104, cysteine 107, cysteine 115, and cysteine 164. NADP(+) contacts are provided by residues threonine 168, 189-194 (GLGGVG), 212-217 (SSSDKK), threonine 252, glycine 276, and 299-301 (SFV).

The protein belongs to the zinc-containing alcohol dehydrogenase family. Homodimer. Zn(2+) serves as cofactor. As to expression, most actively expressed in stem, hypocotyl and root tissue.

It catalyses the reaction (E)-cinnamyl alcohol + NADP(+) = (E)-cinnamaldehyde + NADPH + H(+). It carries out the reaction (E)-coniferol + NADP(+) = (E)-coniferaldehyde + NADPH + H(+). The enzyme catalyses (E)-sinapyl alcohol + NADP(+) = (E)-sinapaldehyde + NADPH + H(+). The catalysed reaction is (E)-4-coumaroyl alcohol + NADP(+) = (E)-4-coumaraldehyde + NADPH + H(+). It catalyses the reaction (E)-caffeyl alcohol + NADP(+) = (E)-caffeyl aldehyde + NADPH + H(+). The protein operates within aromatic compound metabolism; phenylpropanoid biosynthesis. This protein catalyzes the final step in a branch of phenylpropanoid synthesis specific for production of lignin monomers. It acts on coniferyl-, sinapyl-, 4-coumaryl- and cinnamyl-alcohol. The protein is Probable cinnamyl alcohol dehydrogenase (CAD2) of Medicago sativa (Alfalfa).